The primary structure comprises 450 residues: Glutamyl-tRNA reductase (450 aa).

Substrate-binding positions include 45 to 48 (TCNR), serine 107, 112 to 114 (ERE), and glutamine 118. Catalysis depends on cysteine 46, which acts as the Nucleophile. 196–201 (GTGAYA) provides a ligand contact to NADP(+).

It belongs to the glutamyl-tRNA reductase family. In terms of assembly, homodimer.

The catalysed reaction is (S)-4-amino-5-oxopentanoate + tRNA(Glu) + NADP(+) = L-glutamyl-tRNA(Glu) + NADPH + H(+). Its pathway is porphyrin-containing compound metabolism; protoporphyrin-IX biosynthesis; 5-aminolevulinate from L-glutamyl-tRNA(Glu): step 1/2. In terms of biological role, catalyzes the NADPH-dependent reduction of glutamyl-tRNA(Glu) to glutamate 1-semialdehyde (GSA). In Micrococcus luteus (strain ATCC 4698 / DSM 20030 / JCM 1464 / CCM 169 / CCUG 5858 / IAM 1056 / NBRC 3333 / NCIMB 9278 / NCTC 2665 / VKM Ac-2230) (Micrococcus lysodeikticus), this protein is Glutamyl-tRNA reductase.